Consider the following 901-residue polypeptide: Cyanophycin synthetase (901 aa).

In terms of domain architecture, ATP-grasp spans 224–478 (KRILAASGVP…VAGAVMDMLF (255 aa)). 493 to 499 (GTNGKTT) contributes to the ATP binding site.

The protein in the C-terminal section; belongs to the MurCDEF family. As to quaternary structure, homodimer.

It carries out the reaction [L-4-(L-arginin-2-N-yl)aspartate](n) + L-aspartate + ATP = [L-4-(L-arginin-2-N-yl)aspartate](n)-L-aspartate + ADP + phosphate + H(+). The enzyme catalyses [L-4-(L-arginin-2-N-yl)aspartate](n)-L-aspartate + L-arginine + ATP = [L-4-(L-arginin-2-N-yl)aspartate](n+1) + ADP + phosphate + H(+). In terms of biological role, catalyzes the ATP-dependent polymerization of arginine and aspartate to multi-L-arginyl-poly-L-aspartic acid (cyanophycin; a water-insoluble reserve polymer). This Nostoc sp. (strain PCC 7120 / SAG 25.82 / UTEX 2576) protein is Cyanophycin synthetase (cphA).